The sequence spans 337 residues: Casein kinase I isoform alpha (337 aa).

In terms of domain architecture, Protein kinase spans 17–285 (YKLVRKIGSG…YLRQLFRILF (269 aa)). Residues 23–31 (IGSGSFGDI) and lysine 46 contribute to the ATP site. Aspartate 136 acts as the Proton acceptor in catalysis. Over residues 309-325 (AASSSGQGQQAQTPTGK) the composition is skewed to low complexity. Positions 309 to 337 (AASSSGQGQQAQTPTGKQTDKSKSNMKGF) are disordered.

The protein belongs to the protein kinase superfamily. CK1 Ser/Thr protein kinase family. Casein kinase I subfamily. Autophosphorylated.

It is found in the cytoplasm. It localises to the cytoskeleton. The protein localises to the microtubule organizing center. Its subcellular location is the centrosome. The protein resides in the chromosome. It is found in the centromere. It localises to the kinetochore. The protein localises to the nucleus speckle. Its subcellular location is the cilium basal body. The protein resides in the spindle. The catalysed reaction is L-seryl-[protein] + ATP = O-phospho-L-seryl-[protein] + ADP + H(+). The enzyme catalyses L-threonyl-[protein] + ATP = O-phospho-L-threonyl-[protein] + ADP + H(+). In terms of biological role, casein kinases are operationally defined by their preferential utilization of acidic proteins such as caseins as substrates. It can phosphorylate a large number of proteins. Participates in Wnt signaling. May play a role in segregating chromosomes during mitosis. May play a role in keratin cytoskeleton disassembly. The chain is Casein kinase I isoform alpha (CSNK1A1) from Gallus gallus (Chicken).